Consider the following 350-residue polypeptide: UDP-3-O-acylglucosamine N-acyltransferase (350 aa).

Catalysis depends on H244, which acts as the Proton acceptor.

It belongs to the transferase hexapeptide repeat family. LpxD subfamily. Homotrimer.

The catalysed reaction is a UDP-3-O-[(3R)-3-hydroxyacyl]-alpha-D-glucosamine + a (3R)-hydroxyacyl-[ACP] = a UDP-2-N,3-O-bis[(3R)-3-hydroxyacyl]-alpha-D-glucosamine + holo-[ACP] + H(+). The protein operates within bacterial outer membrane biogenesis; LPS lipid A biosynthesis. Functionally, catalyzes the N-acylation of UDP-3-O-acylglucosamine using 3-hydroxyacyl-ACP as the acyl donor. Is involved in the biosynthesis of lipid A, a phosphorylated glycolipid that anchors the lipopolysaccharide to the outer membrane of the cell. The polypeptide is UDP-3-O-acylglucosamine N-acyltransferase (Herminiimonas arsenicoxydans).